The chain runs to 178 residues: Ribosome rescue factor SmrB (178 aa).

A Smr domain is found at 99–174; the sequence is LDLHGLTQMQ…GNAALLILIE (76 aa).

The protein belongs to the SmrB family. As to quaternary structure, associates with collided ribosomes, but not with correctly translating polysomes.

In terms of biological role, acts as a ribosome collision sensor. Detects stalled/collided disomes (pairs of ribosomes where the leading ribosome is stalled and a second ribosome has collided with it) and endonucleolytically cleaves mRNA at the 5' boundary of the stalled ribosome. Stalled/collided disomes form a new interface (primarily via the 30S subunits) that binds SmrB. Cleaved mRNA becomes available for tmRNA ligation, leading to ribosomal subunit dissociation and rescue of stalled ribosomes. The sequence is that of Ribosome rescue factor SmrB from Photorhabdus laumondii subsp. laumondii (strain DSM 15139 / CIP 105565 / TT01) (Photorhabdus luminescens subsp. laumondii).